The following is a 133-amino-acid chain: Small ribosomal subunit protein mS23 (133 aa).

The protein belongs to the mitochondrion-specific ribosomal protein mS23 family. As to quaternary structure, component of the mitochondrial ribosome small subunit (28S) which comprises a 12S rRNA and about 30 distinct proteins.

Its subcellular location is the mitochondrion. The polypeptide is Small ribosomal subunit protein mS23 (mrps-23) (Caenorhabditis elegans).